The sequence spans 160 residues: Cytochrome b6-f complex subunit 4 (160 aa).

The next 3 helical transmembrane spans lie at 36–56, 95–115, and 127–147; these read LLYTFPVVILGTITCCIGLAL, LLGVLSMASVPLGLIFVPFIE, and PIATTVFLVGTVVTIWLGIGA.

This sequence belongs to the cytochrome b family. PetD subfamily. In terms of assembly, the 4 large subunits of the cytochrome b6-f complex are cytochrome b6, subunit IV (17 kDa polypeptide, petD), cytochrome f and the Rieske protein, while the 4 small subunits are petG, petL, petM and petN. The complex functions as a dimer.

It localises to the plastid. Its subcellular location is the chloroplast thylakoid membrane. In terms of biological role, component of the cytochrome b6-f complex, which mediates electron transfer between photosystem II (PSII) and photosystem I (PSI), cyclic electron flow around PSI, and state transitions. This chain is Cytochrome b6-f complex subunit 4, found in Cyanidioschyzon merolae (strain NIES-3377 / 10D) (Unicellular red alga).